The chain runs to 203 residues: Urease accessory protein UreG (203 aa).

14–21 (GPVGSGKT) contacts GTP.

Belongs to the SIMIBI class G3E GTPase family. UreG subfamily. In terms of assembly, homodimer. UreD, UreF and UreG form a complex that acts as a GTP-hydrolysis-dependent molecular chaperone, activating the urease apoprotein by helping to assemble the nickel containing metallocenter of UreC. The UreE protein probably delivers the nickel.

It is found in the cytoplasm. Facilitates the functional incorporation of the urease nickel metallocenter. This process requires GTP hydrolysis, probably effectuated by UreG. This Rhizobium etli (strain ATCC 51251 / DSM 11541 / JCM 21823 / NBRC 15573 / CFN 42) protein is Urease accessory protein UreG.